Here is an 84-residue protein sequence, read N- to C-terminus: RNA-binding protein Hfq (84 aa).

One can recognise a Sm domain in the interval 11-71 (DTFLNFVRKN…ISTIMPGAPI (61 aa)).

Belongs to the Hfq family. As to quaternary structure, homohexamer.

Its function is as follows. RNA chaperone that binds small regulatory RNA (sRNAs) and mRNAs to facilitate mRNA translational regulation in response to envelope stress, environmental stress and changes in metabolite concentrations. Also binds with high specificity to tRNAs. The protein is RNA-binding protein Hfq of Beijerinckia indica subsp. indica (strain ATCC 9039 / DSM 1715 / NCIMB 8712).